A 177-amino-acid polypeptide reads, in one-letter code: Bifunctional protein PyrR (177 aa).

A PRPP-binding motif is present at residues 99–111 (VVLVDDVIYKGRT).

This sequence belongs to the purine/pyrimidine phosphoribosyltransferase family. PyrR subfamily.

It carries out the reaction UMP + diphosphate = 5-phospho-alpha-D-ribose 1-diphosphate + uracil. Functionally, regulates the transcription of the pyrimidine nucleotide (pyr) operon in response to exogenous pyrimidines. In terms of biological role, also displays a weak uracil phosphoribosyltransferase activity which is not physiologically significant. This is Bifunctional protein PyrR from Gloeothece citriformis (strain PCC 7424) (Cyanothece sp. (strain PCC 7424)).